The following is a 384-amino-acid chain: L-aspartate decarboxylase (384 aa).

Lys231 carries the N6-(pyridoxal phosphate)lysine modification.

This sequence belongs to the group II decarboxylase family. MfnA subfamily. Homodimer. Can also form homohexamers. Pyridoxal 5'-phosphate is required as a cofactor.

It carries out the reaction L-aspartate + H(+) = beta-alanine + CO2. The protein operates within cofactor biosynthesis; coenzyme A biosynthesis. Its activity is regulated as follows. Inhibited by hydroxylamine. Its function is as follows. Catalyzes the decarboxylation of L-aspartate to produce beta-alanine. In vitro, can also catalyze the decarboxylation of L-glutamate to produce 4-aminobutanoate, but this activity does not seem necessary in vivo. Shows much higher activity with L-aspartate than with L-glutamate. Does not decarboxylate L-tyrosine. This Thermococcus kodakarensis (strain ATCC BAA-918 / JCM 12380 / KOD1) (Pyrococcus kodakaraensis (strain KOD1)) protein is L-aspartate decarboxylase.